Here is a 548-residue protein sequence, read N- to C-terminus: 2-succinyl-5-enolpyruvyl-6-hydroxy-3-cyclohexene-1-carboxylate synthase (548 aa).

It belongs to the TPP enzyme family. MenD subfamily. In terms of assembly, homodimer. It depends on Mg(2+) as a cofactor. The cofactor is Mn(2+). Thiamine diphosphate serves as cofactor.

The enzyme catalyses isochorismate + 2-oxoglutarate + H(+) = 5-enolpyruvoyl-6-hydroxy-2-succinyl-cyclohex-3-ene-1-carboxylate + CO2. Its pathway is quinol/quinone metabolism; 1,4-dihydroxy-2-naphthoate biosynthesis; 1,4-dihydroxy-2-naphthoate from chorismate: step 2/7. The protein operates within quinol/quinone metabolism; menaquinone biosynthesis. Catalyzes the thiamine diphosphate-dependent decarboxylation of 2-oxoglutarate and the subsequent addition of the resulting succinic semialdehyde-thiamine pyrophosphate anion to isochorismate to yield 2-succinyl-5-enolpyruvyl-6-hydroxy-3-cyclohexene-1-carboxylate (SEPHCHC). The chain is 2-succinyl-5-enolpyruvyl-6-hydroxy-3-cyclohexene-1-carboxylate synthase from Mycobacterium marinum (strain ATCC BAA-535 / M).